Here is an 864-residue protein sequence, read N- to C-terminus: Leucine--tRNA ligase (864 aa).

Residues 42–52 (PYPSGKLHMGH) carry the 'HIGH' region motif. The 'KMSKS' region motif lies at 624-628 (KMSKS). K627 serves as a coordination point for ATP.

The protein belongs to the class-I aminoacyl-tRNA synthetase family.

The protein resides in the cytoplasm. The enzyme catalyses tRNA(Leu) + L-leucine + ATP = L-leucyl-tRNA(Leu) + AMP + diphosphate. This is Leucine--tRNA ligase from Burkholderia cenocepacia (strain HI2424).